The sequence spans 366 residues: Pectinesterase A (366 aa).

Positions 1–24 (MLKTISGTLALSLIIAASVHQAQA) are cleaved as a signal peptide. Positions 109 and 153 each coordinate substrate. The active-site Proton donor is the Asp178. Cysteines 192 and 212 form a disulfide. The active-site Nucleophile is Asp199. Substrate contacts are provided by Arg219, Asn226, Tyr230, Arg267, Trp269, and Thr272.

The protein belongs to the pectinesterase family. Monomer.

The protein localises to the secreted. The enzyme catalyses [(1-&gt;4)-alpha-D-galacturonosyl methyl ester](n) + n H2O = [(1-&gt;4)-alpha-D-galacturonosyl](n) + n methanol + n H(+). It participates in glycan metabolism; pectin degradation; 2-dehydro-3-deoxy-D-gluconate from pectin: step 1/5. Functionally, catalyzes the first step in maceration and soft-rotting of plant tissue. The protein is Pectinesterase A of Dickeya dadantii (strain 3937) (Erwinia chrysanthemi (strain 3937)).